Here is a 668-residue protein sequence, read N- to C-terminus: UvrABC system protein B (668 aa).

Residues 25–176 (THLQSGHSRQ…DQRQLLRNLA (152 aa)) enclose the Helicase ATP-binding domain. 38–45 (GATGTGKT) provides a ligand contact to ATP. Positions 91 to 114 (YYDYYQPEAYIPVTDTFIEKTASI) match the Beta-hairpin motif. One can recognise a Helicase C-terminal domain in the interval 429 to 591 (QVDDLLAEIQ…ITPQPVKKGS (163 aa)). Residues 626–661 (PELITQLEAQMKEAAKNLEFEEAAKYRDRIKNLRSK) form the UVR domain.

This sequence belongs to the UvrB family. In terms of assembly, forms a heterotetramer with UvrA during the search for lesions. Interacts with UvrC in an incision complex.

The protein resides in the cytoplasm. The UvrABC repair system catalyzes the recognition and processing of DNA lesions. A damage recognition complex composed of 2 UvrA and 2 UvrB subunits scans DNA for abnormalities. Upon binding of the UvrA(2)B(2) complex to a putative damaged site, the DNA wraps around one UvrB monomer. DNA wrap is dependent on ATP binding by UvrB and probably causes local melting of the DNA helix, facilitating insertion of UvrB beta-hairpin between the DNA strands. Then UvrB probes one DNA strand for the presence of a lesion. If a lesion is found the UvrA subunits dissociate and the UvrB-DNA preincision complex is formed. This complex is subsequently bound by UvrC and the second UvrB is released. If no lesion is found, the DNA wraps around the other UvrB subunit that will check the other stand for damage. The sequence is that of UvrABC system protein B from Acaryochloris marina (strain MBIC 11017).